A 163-amino-acid chain; its full sequence is Cyclic pyranopterin monophosphate synthase (163 aa).

Substrate contacts are provided by residues 75-77 and 115-116; these read LCH and ME. The active site involves D130.

This sequence belongs to the MoaC family. In terms of assembly, homohexamer; trimer of dimers.

It carries out the reaction (8S)-3',8-cyclo-7,8-dihydroguanosine 5'-triphosphate = cyclic pyranopterin phosphate + diphosphate. Its pathway is cofactor biosynthesis; molybdopterin biosynthesis. Functionally, catalyzes the conversion of (8S)-3',8-cyclo-7,8-dihydroguanosine 5'-triphosphate to cyclic pyranopterin monophosphate (cPMP). This is Cyclic pyranopterin monophosphate synthase from Variovorax paradoxus (strain S110).